Here is a 189-residue protein sequence, read N- to C-terminus: Elongation factor P (189 aa).

An N6-(3,6-diaminohexanoyl)-5-hydroxylysine modification is found at K34.

The protein belongs to the elongation factor P family. Post-translationally, may be beta-lysylated on the epsilon-amino group of Lys-34 by the combined action of EpmA and EpmB, and then hydroxylated on the C5 position of the same residue by EpmC (if this protein is present). Lysylation is critical for the stimulatory effect of EF-P on peptide-bond formation. The lysylation moiety may extend toward the peptidyltransferase center and stabilize the terminal 3-CCA end of the tRNA. Hydroxylation of the C5 position on Lys-34 may allow additional potential stabilizing hydrogen-bond interactions with the P-tRNA.

It is found in the cytoplasm. Its pathway is protein biosynthesis; polypeptide chain elongation. Its function is as follows. Involved in peptide bond synthesis. Alleviates ribosome stalling that occurs when 3 or more consecutive Pro residues or the sequence PPG is present in a protein, possibly by augmenting the peptidyl transferase activity of the ribosome. Modification of Lys-34 is required for alleviation. The chain is Elongation factor P from Alkalilimnicola ehrlichii (strain ATCC BAA-1101 / DSM 17681 / MLHE-1).